The sequence spans 98 residues: Integration host factor subunit beta (98 aa).

This sequence belongs to the bacterial histone-like protein family. In terms of assembly, heterodimer of an alpha and a beta chain.

This protein is one of the two subunits of integration host factor, a specific DNA-binding protein that functions in genetic recombination as well as in transcriptional and translational control. The chain is Integration host factor subunit beta from Hahella chejuensis (strain KCTC 2396).